Reading from the N-terminus, the 384-residue chain is Substance-K receptor (384 aa).

At 1 to 32 (MGAHAIVTDANISSSLENNTTGITAFSMPGWQ) the chain is on the extracellular side. Asn-11, Asn-18, and Asn-19 each carry an N-linked (GlcNAc...) asparagine glycan. Residues 33 to 56 (LALWATAYLVLVLVAVTGNATVIW) form a helical membrane-spanning segment. Topologically, residues 57-69 (IILAHQRMRTVTN) are cytoplasmic. Residues 70-90 (YFIVNLALADLCMAAFNAAFN) form a helical membrane-spanning segment. At 91–107 (FVYASHNIWYFGRAFCH) the chain is on the extracellular side. Cys-106 and Cys-181 are joined by a disulfide. Residues 108 to 129 (FQNLFPITAMFVSIYSMTAIAA) traverse the membrane as a helical segment. Topologically, residues 130 to 149 (DRYVAIVHPFQPRLSAPGTR) are cytoplasmic. A helical transmembrane segment spans residues 150-170 (AVIAGIWLLALALAFPQCFYS). Over 171-196 (TITMDQGATKCVVVWPEDNGSKMLLL) the chain is Extracellular. A helical membrane pass occupies residues 197 to 218 (YHLVVIALIYVLPLLVMLLAYS). At 219–251 (VIGLTLWRREVPRHQVHGASLRHLRAKKKFVKT) the chain is on the cytoplasmic side. The chain crosses the membrane as a helical span at residues 252-272 (MVLVVVTFAICWLPYHFYFIL). At 273–290 (GSFQEDIYYHKFIQQVYL) the chain is on the extracellular side. A helical membrane pass occupies residues 291–310 (ALFWLAMSSTMYNPIIYCCL). Residues 311 to 384 (NHRFRSGFRL…GPQDGLPDEP (74 aa)) are Cytoplasmic-facing. Residue Cys-324 is the site of S-palmitoyl cysteine attachment.

Belongs to the G-protein coupled receptor 1 family.

The protein resides in the cell membrane. This is a receptor for the tachykinin neuropeptide substance K (neurokinin A). It is associated with G proteins that activate a phosphatidylinositol-calcium second messenger system. This Canis lupus familiaris (Dog) protein is Substance-K receptor (TACR2).